Consider the following 179-residue polypeptide: Nucleoside-triphosphatase THEP1 (179 aa).

ATP is bound by residues 7–14 (GRPGVGKT) and 94–101 (LIIVDEIG).

The protein belongs to the THEP1 NTPase family.

It carries out the reaction a ribonucleoside 5'-triphosphate + H2O = a ribonucleoside 5'-diphosphate + phosphate + H(+). In terms of biological role, has nucleotide phosphatase activity towards ATP, GTP, CTP, TTP and UTP. May hydrolyze nucleoside diphosphates with lower efficiency. The polypeptide is Nucleoside-triphosphatase THEP1 (Thermotoga petrophila (strain ATCC BAA-488 / DSM 13995 / JCM 10881 / RKU-1)).